We begin with the raw amino-acid sequence, 438 residues long: Glutamate-1-semialdehyde 2,1-aminomutase (438 aa).

Residue K278 is modified to N6-(pyridoxal phosphate)lysine.

This sequence belongs to the class-III pyridoxal-phosphate-dependent aminotransferase family. HemL subfamily. In terms of assembly, homodimer. Pyridoxal 5'-phosphate serves as cofactor.

It is found in the cytoplasm. It catalyses the reaction (S)-4-amino-5-oxopentanoate = 5-aminolevulinate. The protein operates within porphyrin-containing compound metabolism; protoporphyrin-IX biosynthesis; 5-aminolevulinate from L-glutamyl-tRNA(Glu): step 2/2. The chain is Glutamate-1-semialdehyde 2,1-aminomutase from Delftia acidovorans (strain DSM 14801 / SPH-1).